Reading from the N-terminus, the 421-residue chain is Lipid II:glycine glycyltransferase (421 aa).

It belongs to the FemABX family. In terms of assembly, monomer.

Its subcellular location is the cytoplasm. The catalysed reaction is beta-D-GlcNAc-(1-&gt;4)-Mur2Ac(oyl-L-Ala-D-isoglutaminyl-L-Lys-D-Ala-D-Ala)-di-trans,octa-cis-undecaprenyl diphosphate + glycyl-tRNA(Gly) = beta-D-GlcNAc-(1-&gt;4)-Mur2Ac(oyl-L-Ala-D-isoglutaminyl-L-Lys-(N(6)-Gly)-D-Ala-D-Ala)-di-trans,octa-cis-undecaprenyl diphosphate + tRNA(Gly) + H(+). Its function is as follows. Catalyzes the incorporation of the first glycine of the pentaglycine interpeptide bridge, which is characteristic of the S.aureus peptidoglycan. This glycine is added to the epsilon-amino group of the L-lysine of the membrane-bound lipid II intermediate (GlcNAc-(beta-1,4)-N-acetylmuramic acid(-L-Ala-D-iGln-L-Lys-D-Ala-D-Ala)-pyrophosphoryl-undecaprenol), using glycyl-tRNA(Gly) as donor, in a ribosome-independent mechanism. Involved in methicillin resistance. The polypeptide is Lipid II:glycine glycyltransferase (femX) (Staphylococcus aureus (strain MRSA252)).